The chain runs to 218 residues: uncharacterized protein (218 aa).

Disordered regions lie at residues 30-71, 93-120, and 133-209; these read FSHR…RSPP, SGRG…PRPD, and MEVE…PGFP. Residues 43–71 are compositionally biased toward low complexity; the sequence is PGAPAVVPAPVSAPRPASSPARSESRSPP. The span at 94 to 110 shows a compositional bias: gly residues; that stretch reads GRGGGGGGGGGARTGGG. Residues 138 to 148 show a composition bias toward pro residues; that stretch reads PPHPPPQPQVC. The span at 156-171 shows a compositional bias: gly residues; that stretch reads PGHGRAGLPEGKGPGG. A compositionally biased stretch (low complexity) spans 191-209; sequence RAPSPAAPRRGRLPAPGFP.

This is an uncharacterized protein from Homo sapiens (Human).